Consider the following 323-residue polypeptide: Lipoyl synthase (323 aa).

[4Fe-4S] cluster contacts are provided by C56, C61, C67, C82, C86, C89, and S293. Positions 68–282 constitute a Radical SAM core domain; sequence WEDREATFLI…AAEARELGFA (215 aa).

Belongs to the radical SAM superfamily. Lipoyl synthase family. The cofactor is [4Fe-4S] cluster.

Its subcellular location is the cytoplasm. The enzyme catalyses [[Fe-S] cluster scaffold protein carrying a second [4Fe-4S](2+) cluster] + N(6)-octanoyl-L-lysyl-[protein] + 2 oxidized [2Fe-2S]-[ferredoxin] + 2 S-adenosyl-L-methionine + 4 H(+) = [[Fe-S] cluster scaffold protein] + N(6)-[(R)-dihydrolipoyl]-L-lysyl-[protein] + 4 Fe(3+) + 2 hydrogen sulfide + 2 5'-deoxyadenosine + 2 L-methionine + 2 reduced [2Fe-2S]-[ferredoxin]. The protein operates within protein modification; protein lipoylation via endogenous pathway; protein N(6)-(lipoyl)lysine from octanoyl-[acyl-carrier-protein]: step 2/2. Catalyzes the radical-mediated insertion of two sulfur atoms into the C-6 and C-8 positions of the octanoyl moiety bound to the lipoyl domains of lipoate-dependent enzymes, thereby converting the octanoylated domains into lipoylated derivatives. The protein is Lipoyl synthase of Acidothermus cellulolyticus (strain ATCC 43068 / DSM 8971 / 11B).